The following is a 253-amino-acid chain: Carboxy-S-adenosyl-L-methionine synthase (253 aa).

S-adenosyl-L-methionine is bound by residues Tyr49, 74-76 (GCS), 98-99 (DN), and Asn141.

Belongs to the class I-like SAM-binding methyltransferase superfamily. Cx-SAM synthase family.

It carries out the reaction prephenate + S-adenosyl-L-methionine = carboxy-S-adenosyl-L-methionine + 3-phenylpyruvate + H2O. Its function is as follows. Catalyzes the conversion of S-adenosyl-L-methionine (SAM) to carboxy-S-adenosyl-L-methionine (Cx-SAM). This chain is Carboxy-S-adenosyl-L-methionine synthase, found in Trichodesmium erythraeum (strain IMS101).